A 283-amino-acid polypeptide reads, in one-letter code: Transmembrane protein 119 (283 aa).

A signal peptide spans 1-25 (MVSAAAPSLLILLLLLLGSVPATDA). Residues 26–96 (RSVPLKATFL…IVDFFRQYVM (71 aa)) lie on the Extracellular side of the membrane. Ser-41 carries O-linked (Xyl...) (chondroitin sulfate) serine glycosylation. Positions 43–52 (EAEGSSASSP) are enriched in low complexity. Positions 43-76 (EAEGSSASSPSLPPPWTPALSPTSMGPQPITLGG) are disordered. The helical transmembrane segment at 97–117 (LIAVVGSLAFLLMFIVCAAVI) threads the bilayer. At 118-283 (TRQKQKASAY…CACSSVHPSV (166 aa)) the chain is on the cytoplasmic side. Disordered stretches follow at residues 136 to 168 (KYVD…ALDS) and 183 to 283 (LKSP…HPSV). Basic and acidic residues-rich tracts occupy residues 153–164 (VPDRAPDSRPEE) and 198–213 (RMVE…KGSQ). Residues 238–264 (GVLEGAVVAGEGQGELEGSLLLAQEAQ) are compositionally biased toward low complexity. Position 272 is a phosphoserine (Ser-272).

Interacts with SMAD1, SMAD5 and RUNX2. Expressed in brain microglia (at protein level). Detected in urine (at protein level). Elevated expression levels seen in the brain of patients with Alzheimer disease. Expressed by osteoblast-like cells in bone tissues and follicular dendritic cells in lymphoid tissues.

Its subcellular location is the cell membrane. The protein resides in the cytoplasm. The protein localises to the endoplasmic reticulum membrane. It localises to the secreted. Functionally, plays an important role in bone formation and normal bone mineralization. Promotes the differentiation of myoblasts into osteoblasts. May induce the commitment and differentiation of myoblasts into osteoblasts through an enhancement of BMP2 production and interaction with the BMP-RUNX2 pathway. Up-regulates the expression of ATF4, a transcription factor which plays a central role in osteoblast differentiation. Essential for normal spermatogenesis and late testicular differentiation. This is Transmembrane protein 119 (TMEM119) from Homo sapiens (Human).